A 306-amino-acid polypeptide reads, in one-letter code: MIALLSINFVAFFVFLLILKYWINFQRNKGIGKYIRKEGPSSHFQKSGTPVMGGIVFILAVFPFLFFKETFFISLSTILFGLLGLVDDLKLMENKDYGIRPLRKIFLSFIITLILYVFSPHDYKIYWGSHLIIDSSILYIFLFFIILIAVPNAINLTDGLDGLAGGTSLVTLIFLLVYSFHFKKIALEISLMITALLAFLWFNSHPAEIFMGDVGAFALGGFIASLSVVNKVELLLIFLSGIFLIESLSVFIQVFFYKWKKKRIFLMSPIHHHFELKGWKETKIVWRFYIIHLLIIIGGLVLWYWS.

10 helical membrane-spanning segments follow: residues 2–22 (IALL…LKYW), 47–67 (SGTP…FLFF), 71–91 (FFIS…DLKL), 105–125 (IFLS…DYKI), 131–151 (LIID…IAVP), 162–182 (GLAG…SFHF), 185–205 (IALE…FNSH), 209–229 (IFMG…LSVV), 236–256 (LIFL…QVFF), and 284–304 (IVWR…VLWY).

This sequence belongs to the glycosyltransferase 4 family. MraY subfamily. It depends on Mg(2+) as a cofactor.

It is found in the cell inner membrane. The enzyme catalyses UDP-N-acetyl-alpha-D-muramoyl-L-alanyl-gamma-D-glutamyl-meso-2,6-diaminopimeloyl-D-alanyl-D-alanine + di-trans,octa-cis-undecaprenyl phosphate = di-trans,octa-cis-undecaprenyl diphospho-N-acetyl-alpha-D-muramoyl-L-alanyl-D-glutamyl-meso-2,6-diaminopimeloyl-D-alanyl-D-alanine + UMP. It participates in cell wall biogenesis; peptidoglycan biosynthesis. In terms of biological role, catalyzes the initial step of the lipid cycle reactions in the biosynthesis of the cell wall peptidoglycan: transfers peptidoglycan precursor phospho-MurNAc-pentapeptide from UDP-MurNAc-pentapeptide onto the lipid carrier undecaprenyl phosphate, yielding undecaprenyl-pyrophosphoryl-MurNAc-pentapeptide, known as lipid I. This chain is Phospho-N-acetylmuramoyl-pentapeptide-transferase, found in Dictyoglomus thermophilum (strain ATCC 35947 / DSM 3960 / H-6-12).